The primary structure comprises 216 residues: Large ribosomal subunit protein eL15 (216 aa).

Belongs to the eukaryotic ribosomal protein eL15 family.

The protein is Large ribosomal subunit protein eL15 of Metallosphaera sedula (strain ATCC 51363 / DSM 5348 / JCM 9185 / NBRC 15509 / TH2).